A 304-amino-acid polypeptide reads, in one-letter code: Acetyl-coenzyme A carboxylase carboxyl transferase subunit beta (304 aa).

A CoA carboxyltransferase N-terminal domain is found at 25 to 294; the sequence is LWIKCPETGE…EAARRESGSQ (270 aa).

It belongs to the AccD/PCCB family. Acetyl-CoA carboxylase is a heterohexamer composed of biotin carboxyl carrier protein (AccB), biotin carboxylase (AccC) and two subunits each of ACCase subunit alpha (AccA) and ACCase subunit beta (AccD).

Its subcellular location is the cytoplasm. It catalyses the reaction N(6)-carboxybiotinyl-L-lysyl-[protein] + acetyl-CoA = N(6)-biotinyl-L-lysyl-[protein] + malonyl-CoA. Its pathway is lipid metabolism; malonyl-CoA biosynthesis; malonyl-CoA from acetyl-CoA: step 1/1. Its function is as follows. Component of the acetyl coenzyme A carboxylase (ACC) complex. Biotin carboxylase (BC) catalyzes the carboxylation of biotin on its carrier protein (BCCP) and then the CO(2) group is transferred by the transcarboxylase to acetyl-CoA to form malonyl-CoA. The chain is Acetyl-coenzyme A carboxylase carboxyl transferase subunit beta from Sinorhizobium fredii (strain NBRC 101917 / NGR234).